A 202-amino-acid chain; its full sequence is uncharacterized protein (202 aa).

The tract at residues 178-202 is disordered; sequence VCSSEDSEADRYSDYGWGGPSSPFN.

This is an uncharacterized protein from Homo sapiens (Human).